The primary structure comprises 324 residues: dITP/XTP pyrophosphatase (324 aa).

Positions Met-1–Val-126 are unknown. Positions Leu-127–Gln-324 are NTP pyrophosphatase. Residue Thr-131 to Lys-136 participates in substrate binding. The Proton acceptor role is filled by Asp-193. Residue Asp-193 participates in Mg(2+) binding. Substrate-binding positions include Ser-194, Phe-277 to Asp-280, Lys-300, and His-305 to Arg-306.

The protein belongs to the HAM1 NTPase family. As to quaternary structure, homodimer. It depends on Mg(2+) as a cofactor.

It carries out the reaction XTP + H2O = XMP + diphosphate + H(+). The enzyme catalyses dITP + H2O = dIMP + diphosphate + H(+). The catalysed reaction is ITP + H2O = IMP + diphosphate + H(+). Its function is as follows. Pyrophosphatase that catalyzes the hydrolysis of nucleoside triphosphates to their monophosphate derivatives, with a high preference for the non-canonical purine nucleotides XTP (xanthosine triphosphate), dITP (deoxyinosine triphosphate) and ITP. Seems to function as a house-cleaning enzyme that removes non-canonical purine nucleotides from the nucleotide pool, thus preventing their incorporation into DNA/RNA and avoiding chromosomal lesions. This is dITP/XTP pyrophosphatase from Streptococcus thermophilus (strain ATCC BAA-250 / LMG 18311).